The chain runs to 124 residues: Small ribosomal subunit protein uS12 (124 aa).

Asp-89 is modified (3-methylthioaspartic acid). Positions 105–124 (QGVKNRKQARSRYGAKKEKS) are disordered. The segment covering 108–118 (KNRKQARSRYG) has biased composition (basic residues).

It belongs to the universal ribosomal protein uS12 family. In terms of assembly, part of the 30S ribosomal subunit. Contacts proteins S8 and S17. May interact with IF1 in the 30S initiation complex.

Its function is as follows. With S4 and S5 plays an important role in translational accuracy. In terms of biological role, interacts with and stabilizes bases of the 16S rRNA that are involved in tRNA selection in the A site and with the mRNA backbone. Located at the interface of the 30S and 50S subunits, it traverses the body of the 30S subunit contacting proteins on the other side and probably holding the rRNA structure together. The combined cluster of proteins S8, S12 and S17 appears to hold together the shoulder and platform of the 30S subunit. The chain is Small ribosomal subunit protein uS12 from Mycobacterium avium (strain 104).